The primary structure comprises 279 residues: Pantothenate synthetase (279 aa).

31–38 (MGALHEGH) provides a ligand contact to ATP. The Proton donor role is filled by H38. Q62 is a binding site for (R)-pantoate. Beta-alanine is bound at residue Q62. 148-151 (GEKD) contacts ATP. Residue Q154 coordinates (R)-pantoate. ATP-binding positions include V177 and 185–188 (LSSR).

This sequence belongs to the pantothenate synthetase family. Homodimer.

The protein localises to the cytoplasm. It catalyses the reaction (R)-pantoate + beta-alanine + ATP = (R)-pantothenate + AMP + diphosphate + H(+). The protein operates within cofactor biosynthesis; (R)-pantothenate biosynthesis; (R)-pantothenate from (R)-pantoate and beta-alanine: step 1/1. Its function is as follows. Catalyzes the condensation of pantoate with beta-alanine in an ATP-dependent reaction via a pantoyl-adenylate intermediate. This Cereibacter sphaeroides (strain ATCC 17029 / ATH 2.4.9) (Rhodobacter sphaeroides) protein is Pantothenate synthetase.